Here is a 540-residue protein sequence, read N- to C-terminus: Mitochondrial distribution and morphology protein 34 (540 aa).

Residues 1–208 (MSFKFNSGTF…LPSVIFNMSQ (208 aa)) form the SMP-LTD domain. 2 disordered regions span residues 26–51 (ALNP…KKPK) and 379–399 (RSKS…SGSL). The span at 35–44 (PESTSGQDGS) shows a compositional bias: polar residues.

Belongs to the MDM34 family. As to quaternary structure, component of the ER-mitochondria encounter structure (ERMES) or MDM complex, composed of MMM1, MDM10, MDM12 and MDM34.

It is found in the mitochondrion outer membrane. Functionally, component of the ERMES/MDM complex, which serves as a molecular tether to connect the endoplasmic reticulum (ER) and mitochondria. Components of this complex are involved in the control of mitochondrial shape and protein biogenesis, and function in nonvesicular lipid trafficking between the ER and mitochondria. MDM34 is required for the interaction of the ER-resident membrane protein MMM1 and the outer mitochondrial membrane-resident beta-barrel protein MDM10. This Kluyveromyces lactis (strain ATCC 8585 / CBS 2359 / DSM 70799 / NBRC 1267 / NRRL Y-1140 / WM37) (Yeast) protein is Mitochondrial distribution and morphology protein 34.